The chain runs to 294 residues: Cytidine deaminase (294 aa).

2 CMP/dCMP-type deaminase domains span residues 48–168 (DDDA…FGPR) and 186–294 (LKGD…VTLA). Substrate is bound at residue 89-91 (NME). Position 102 (H102) interacts with Zn(2+). Catalysis depends on E104, which acts as the Proton donor. Zn(2+)-binding residues include C129 and C132.

It belongs to the cytidine and deoxycytidylate deaminase family. As to quaternary structure, homodimer. The cofactor is Zn(2+).

It carries out the reaction cytidine + H2O + H(+) = uridine + NH4(+). The catalysed reaction is 2'-deoxycytidine + H2O + H(+) = 2'-deoxyuridine + NH4(+). This enzyme scavenges exogenous and endogenous cytidine and 2'-deoxycytidine for UMP synthesis. In Cronobacter sakazakii (strain ATCC BAA-894) (Enterobacter sakazakii), this protein is Cytidine deaminase.